Consider the following 681-residue polypeptide: Peroxisomal acyl-coenzyme A oxidase 2 (681 aa).

At Ser-9 the chain carries Phosphoserine. An N6-succinyllysine mark is found at Lys-66, Lys-137, Lys-453, Lys-561, and Lys-667. Residues 679 to 681 carry the Microbody targeting signal motif; the sequence is SNL.

The protein belongs to the acyl-CoA oxidase family. As to quaternary structure, homodimer. Requires FAD as cofactor. Liver and kidney.

The protein localises to the peroxisome. The enzyme catalyses (25R)-3alpha,7alpha,12alpha-trihydroxy-5beta-cholestan-26-oyl-CoA + A + H2O = (24R,25R)-3alpha,7alpha,12alpha,24-tetrahydroxy-5beta-cholestan-26-oyl-CoA + AH2. The catalysed reaction is (25S)-3alpha,7alpha,12alpha-trihydroxy-5beta-cholestan-26-oyl-CoA + O2 = (24E)-3alpha,7alpha,12alpha-trihydroxy-5beta-cholest-24-en-26-oyl-CoA + H2O2. Functionally, oxidizes the CoA esters of the bile acid intermediates di- and tri-hydroxycholestanoic acids. Capable of oxidizing short as well as long chain 2-methyl branched fatty acids. In Oryctolagus cuniculus (Rabbit), this protein is Peroxisomal acyl-coenzyme A oxidase 2.